The sequence spans 96 residues: uncharacterized protein (96 aa).

This is an uncharacterized protein from Sulfolobus islandicus filamentous virus (isolate Iceland/Hveragerdi) (SIFV).